A 134-amino-acid chain; its full sequence is DNA-directed RNA polymerase subunit omega (134 aa).

It belongs to the RNA polymerase subunit omega family. In terms of assembly, the RNAP catalytic core consists of 2 alpha, 1 beta, 1 beta' and 1 omega subunit. When a sigma factor is associated with the core the holoenzyme is formed, which can initiate transcription.

The enzyme catalyses RNA(n) + a ribonucleoside 5'-triphosphate = RNA(n+1) + diphosphate. Functionally, promotes RNA polymerase assembly. Latches the N- and C-terminal regions of the beta' subunit thereby facilitating its interaction with the beta and alpha subunits. This chain is DNA-directed RNA polymerase subunit omega, found in Rhizobium johnstonii (strain DSM 114642 / LMG 32736 / 3841) (Rhizobium leguminosarum bv. viciae).